Reading from the N-terminus, the 63-residue chain is MAEKTVRVQQIGSPIRREASQRETLIGLKLNKLHRIAELPDTPSVRGMIAKVHHLVRVLDGAA.

The protein belongs to the universal ribosomal protein uL30 family. Part of the 50S ribosomal subunit.

The sequence is that of Large ribosomal subunit protein uL30 from Methylobacterium sp. (strain 4-46).